A 746-amino-acid chain; its full sequence is Stromal interaction molecule 2 (746 aa).

An N-terminal signal peptide occupies residues 1 to 14; that stretch reads MLLFGLLVAGVADG. Over 15–218 the chain is Extracellular; the sequence is CDLVPRHLRG…RPPHNWMKDF (204 aa). Residue S28 is modified to Phosphoserine. In terms of domain architecture, EF-hand spans 67-102; the sequence is FSLEALQTIHKQMDDDKDGGIEVDESDEFIREDMKY. Residues D80, D82, D84, and E91 each contribute to the Ca(2+) site. The N-linked (GlcNAc...) asparagine glycan is linked to N135. The region spanning 136-204 is the SAM domain; it reads WTLEDTLQWL…QLKALDVVLF (69 aa). The helical transmembrane segment at 219–235 threads the bilayer; that stretch reads ILTISIVIGVGGCWFAY. Over 236-746 the chain is Cytoplasmic; that stretch reads TQNKTSKEHV…IKSLFKKKSK (511 aa). The stretch at 247–394 forms a coiled coil; the sequence is KMMKDLESLQ…EKIKKKRSTV (148 aa). Disordered regions lie at residues 490 to 562 and 592 to 651; these read PIVP…PDIL and DTAS…RGSP. S523 bears the Phosphoserine mark. Residues 527 to 539 are compositionally biased toward low complexity; it reads QRAQLPAHAPLAA. Over residues 540–549 the composition is skewed to basic residues; the sequence is HPRHPHHPQH. Phosphoserine occurs at positions 609 and 621. Residues 625 to 637 are compositionally biased toward basic and acidic residues; that stretch reads ISRDELSLEDSSR. Residues S640, S650, S661, S665, S680, and S697 each carry the phosphoserine modification. Positions 684–746 are disordered; that stretch reads LSSGIPVPHP…IKSLFKKKSK (63 aa). Basic and acidic residues predominate over residues 723–732; it reads DLCHNGEKSK. The segment covering 733–746 has biased composition (basic residues); sequence KPSKIKSLFKKKSK.

Oligomer with STIM1. Interacts with ORAI1. Glycosylated. Post-translationally, phosphorylated predominantly on Ser residues.

It localises to the endoplasmic reticulum membrane. Its function is as follows. Plays a role in mediating store-operated Ca(2+) entry (SOCE), a Ca(2+) influx following depletion of intracellular Ca(2+) stores. Functions as a highly sensitive Ca(2+) sensor in the endoplasmic reticulum which activates both store-operated and store-independent Ca(2+)-influx. Regulates basal cytosolic and endoplasmic reticulum Ca(2+) concentrations. Upon mild variations of the endoplasmic reticulum Ca(2+) concentration, translocates from the endoplasmic reticulum to the plasma membrane where it probably activates the Ca(2+) release-activated Ca(2+) (CRAC) channels ORAI1, ORAI2 and ORAI3. May inhibit STIM1-mediated Ca(2+) influx. The polypeptide is Stromal interaction molecule 2 (Stim2) (Mus musculus (Mouse)).